The primary structure comprises 301 residues: Probable tRNA pseudouridine synthase B (301 aa).

Catalysis depends on D54, which acts as the Nucleophile. The PUA domain maps to L227–V301.

It belongs to the pseudouridine synthase TruB family. Type 2 subfamily.

The enzyme catalyses uridine(55) in tRNA = pseudouridine(55) in tRNA. Its function is as follows. Could be responsible for synthesis of pseudouridine from uracil-55 in the psi GC loop of transfer RNAs. This Halobacterium salinarum (strain ATCC 29341 / DSM 671 / R1) protein is Probable tRNA pseudouridine synthase B.